The following is a 419-amino-acid chain: Transcription regulator lscL (419 aa).

The segment at residues 12–35 is a DNA-binding region (zn(2)-C6 fungal-type); it reads RIRKVKCDEKKPCCQKCIDTGRTC.

It is found in the nucleus. Its function is as follows. Transcription factor that may coregulate the expression of the gene cluster that mediates the biosynthesis of the lipopeptide antibiotics leucinostatins that show extensive biological activities, including antimalarial, antiviral, antibacterial, antifungal, and antitumor activities, as well as phytotoxic. This Purpureocillium lilacinum (Paecilomyces lilacinus) protein is Transcription regulator lscL.